A 519-amino-acid polypeptide reads, in one-letter code: DNA-directed RNA polymerase subunit Rpo2N (519 aa).

Belongs to the RNA polymerase beta chain family. As to quaternary structure, part of the RNA polymerase complex.

The protein resides in the cytoplasm. The catalysed reaction is RNA(n) + a ribonucleoside 5'-triphosphate = RNA(n+1) + diphosphate. Functionally, DNA-dependent RNA polymerase (RNAP) catalyzes the transcription of DNA into RNA using the four ribonucleoside triphosphates as substrates. The Rpo2 subunit (Rpo2N and Rpo2C in this organism) is implicated in DNA promoter recognition and in nucleotide binding. The protein is DNA-directed RNA polymerase subunit Rpo2N of Methanothermobacter thermautotrophicus (strain ATCC 29096 / DSM 1053 / JCM 10044 / NBRC 100330 / Delta H) (Methanobacterium thermoautotrophicum).